Reading from the N-terminus, the 447-residue chain is UPF0210 protein LSL_0162 (447 aa).

This sequence belongs to the UPF0210 family. Homodimer.

The protein is UPF0210 protein LSL_0162 of Ligilactobacillus salivarius (strain UCC118) (Lactobacillus salivarius).